Consider the following 238-residue polypeptide: Probable transcriptional regulatory protein SSU05_0402 (238 aa).

This sequence belongs to the TACO1 family. YeeN subfamily.

It is found in the cytoplasm. The chain is Probable transcriptional regulatory protein SSU05_0402 from Streptococcus suis (strain 05ZYH33).